The chain runs to 433 residues: Gamma-glutamyl phosphate reductase (433 aa).

Belongs to the gamma-glutamyl phosphate reductase family.

The protein localises to the cytoplasm. It carries out the reaction L-glutamate 5-semialdehyde + phosphate + NADP(+) = L-glutamyl 5-phosphate + NADPH + H(+). The protein operates within amino-acid biosynthesis; L-proline biosynthesis; L-glutamate 5-semialdehyde from L-glutamate: step 2/2. In terms of biological role, catalyzes the NADPH-dependent reduction of L-glutamate 5-phosphate into L-glutamate 5-semialdehyde and phosphate. The product spontaneously undergoes cyclization to form 1-pyrroline-5-carboxylate. This Rhodopseudomonas palustris (strain BisB18) protein is Gamma-glutamyl phosphate reductase.